The primary structure comprises 159 residues: MSGLTHFDAAGHAHMVDVGGKQETQRIAVARGTIRMLPATFELIRDGKAKKGDVLGVARIAAIQGAKRTADLIPLCHPLALTRVAVDFELDDALPGVHCIAQVETFGRTGVEMEALTAVQVGLLTVYDMCKAVDRGMVIGDVSVTEKRGGKSGDWKAQA.

Substrate is bound by residues 75–77 (LCH) and 113–114 (ME). The active site involves Asp128.

It belongs to the MoaC family. As to quaternary structure, homohexamer; trimer of dimers.

The enzyme catalyses (8S)-3',8-cyclo-7,8-dihydroguanosine 5'-triphosphate = cyclic pyranopterin phosphate + diphosphate. It functions in the pathway cofactor biosynthesis; molybdopterin biosynthesis. Functionally, catalyzes the conversion of (8S)-3',8-cyclo-7,8-dihydroguanosine 5'-triphosphate to cyclic pyranopterin monophosphate (cPMP). The sequence is that of Cyclic pyranopterin monophosphate synthase from Burkholderia multivorans (strain ATCC 17616 / 249).